The primary structure comprises 122 residues: UPF0102 protein CPR_1677 (122 aa).

It belongs to the UPF0102 family.

This is UPF0102 protein CPR_1677 from Clostridium perfringens (strain SM101 / Type A).